The sequence spans 522 residues: Man(5)GlcNAc(2)-PP-dolichol translocation protein RFT1 (522 aa).

Helical transmembrane passes span 35–55, 75–95, 108–128, 143–165, 177–197, 322–342, 354–374, 400–420, 457–477, and 479–499; these read DVLGLVNVRLTLLYSSILFLT, LLWLSPIISTVISVVCVYLWY, VLLSFPISAIIESIAEPFSVI, FAIGQGMLICVKRIFVLAGLFMF, AQYIGAIAYLLFNFVAFYIYI, VVGVIGFVACTFGIPYSPVVI, GGALLLSLYSGYILVTAINGI, IIHLIINYVLCVYMNSAGFIV, TSIFLGVSLLATSFTYLLFAT, and PGLSYTLAHIAIGAVCLILTA.

Belongs to the RFT1 family.

The protein localises to the endoplasmic reticulum membrane. It functions in the pathway protein modification; protein glycosylation. Functionally, intramembrane glycolipid transporter that operates in the biosynthetic pathway of dolichol-linked oligosaccharides, the glycan precursors employed in protein asparagine (N)-glycosylation. The sequential addition of sugars to dolichol pyrophosphate produces dolichol-linked oligosaccharides containing fourteen sugars, including two GlcNAcs, nine mannoses and three glucoses. Once assembled, the oligosaccharide is transferred from the lipid to nascent proteins by oligosaccharyltransferases. The assembly of dolichol-linked oligosaccharides begins on the cytosolic side of the endoplasmic reticulum membrane and finishes in its lumen. RFT1 could mediate the translocation of the cytosolically oriented intermediate DolPP-GlcNAc2Man5, produced by ALG11, into the ER lumen where dolichol-linked oligosaccharides assembly continues. However, the intramembrane lipid transporter activity could not be confirmed in vitro. In Caenorhabditis elegans, this protein is Man(5)GlcNAc(2)-PP-dolichol translocation protein RFT1.